Consider the following 332-residue polypeptide: Biotin synthase (332 aa).

The Radical SAM core domain occupies 53-283 (WGKGGVHACS…VHPRKTIKFA (231 aa)). Positions 71, 75, and 78 each coordinate [4Fe-4S] cluster. [2Fe-2S] cluster contacts are provided by C150, C211, and K281.

It belongs to the radical SAM superfamily. Biotin synthase family. As to quaternary structure, homodimer. Requires [4Fe-4S] cluster as cofactor. [2Fe-2S] cluster is required as a cofactor.

The catalysed reaction is (4R,5S)-dethiobiotin + (sulfur carrier)-SH + 2 reduced [2Fe-2S]-[ferredoxin] + 2 S-adenosyl-L-methionine = (sulfur carrier)-H + biotin + 2 5'-deoxyadenosine + 2 L-methionine + 2 oxidized [2Fe-2S]-[ferredoxin]. It functions in the pathway cofactor biosynthesis; biotin biosynthesis; biotin from 7,8-diaminononanoate: step 2/2. In terms of biological role, catalyzes the conversion of dethiobiotin (DTB) to biotin by the insertion of a sulfur atom into dethiobiotin via a radical-based mechanism. The sequence is that of Biotin synthase from Chlorobium luteolum (strain DSM 273 / BCRC 81028 / 2530) (Pelodictyon luteolum).